A 320-amino-acid chain; its full sequence is Small ribosomal subunit protein uS2 (320 aa).

Residues 254-320 (GDAAKAALPV…APATTGPVSE (67 aa)) form a disordered region. Over residues 272–282 (VSAKNEAKSDD) the composition is skewed to basic and acidic residues. The segment covering 308–320 (AEAAPATTGPVSE) has biased composition (low complexity).

It belongs to the universal ribosomal protein uS2 family.

The sequence is that of Small ribosomal subunit protein uS2 from Clavibacter sepedonicus (Clavibacter michiganensis subsp. sepedonicus).